The sequence spans 230 residues: C-reactive protein (230 aa).

An N-terminal signal peptide occupies residues methionine 1–glycine 19. The Pentraxin (PTX) domain occupies serine 24–proline 223. Residues cysteine 55 and cysteine 114 are joined by a disulfide bond. Asparagine 78 contributes to the Ca(2+) binding site. Asparagine 147 carries an N-linked (GlcNAc...) asparagine glycan. Residues glutamate 155, glutamine 156, aspartate 157, and glutamine 167 each coordinate Ca(2+). Cysteine 227 and cysteine 228 are joined by a disulfide.

This sequence belongs to the pentraxin family. Homopentamer; disulfide-linked. Pentraxin (or pentaxin) have a discoid arrangement of 5 non-covalently bound subunits. Two of the five chains form a dimer linked by two interchain disulfide bonds located in the C-terminal heptapeptide and specific to rat CRP. Interacts with FCN1; may regulate monocyte activation by FCN1. Requires Ca(2+) as cofactor. In terms of processing, the last two cysteines are involved either in interchain disulfide bonds or in an intrachain bond. In terms of tissue distribution, found in plasma.

It localises to the secreted. Displays several functions associated with host defense: it promotes agglutination, bacterial capsular swelling, phagocytosis and complement fixation through its calcium-dependent binding to phosphorylcholine. Can interact with DNA and histones and may scavenge nuclear material released from damaged circulating cells. The polypeptide is C-reactive protein (Crp) (Rattus norvegicus (Rat)).